A 321-amino-acid polypeptide reads, in one-letter code: Serine/threonine-protein phosphatase PP1 (321 aa).

Asp60, His62, Asp88, and Asn120 together coordinate Mn(2+). The Proton donor role is filled by His121. The Mn(2+) site is built by His169 and His244. Positions 298–321 (KKLTNDSNGRPLTPPRNKQQKPKK) are disordered.

The protein belongs to the PPP phosphatase family. Interacts with dpiA. It depends on Mn(2+) as a cofactor.

The catalysed reaction is O-phospho-L-seryl-[protein] + H2O = L-seryl-[protein] + phosphate. It catalyses the reaction O-phospho-L-threonyl-[protein] + H2O = L-threonyl-[protein] + phosphate. Inhibited by okadaic acid, tautomycin and calyculin A. Inhibited by phosphatase inhibitor 2 (dpiA). Functionally, protein phosphatase activity in vitro. The polypeptide is Serine/threonine-protein phosphatase PP1 (pppB) (Dictyostelium discoideum (Social amoeba)).